Consider the following 419-residue polypeptide: Gamma-glutamyl phosphate reductase (419 aa).

This sequence belongs to the gamma-glutamyl phosphate reductase family.

The protein localises to the cytoplasm. It carries out the reaction L-glutamate 5-semialdehyde + phosphate + NADP(+) = L-glutamyl 5-phosphate + NADPH + H(+). The protein operates within amino-acid biosynthesis; L-proline biosynthesis; L-glutamate 5-semialdehyde from L-glutamate: step 2/2. Catalyzes the NADPH-dependent reduction of L-glutamate 5-phosphate into L-glutamate 5-semialdehyde and phosphate. The product spontaneously undergoes cyclization to form 1-pyrroline-5-carboxylate. This chain is Gamma-glutamyl phosphate reductase, found in Syntrophomonas wolfei subsp. wolfei (strain DSM 2245B / Goettingen).